The chain runs to 224 residues: Ribosomal RNA large subunit methyltransferase E (224 aa).

S-adenosyl-L-methionine is bound by residues glycine 64, tryptophan 66, aspartate 97, aspartate 113, and aspartate 138. Lysine 178 functions as the Proton acceptor in the catalytic mechanism.

It belongs to the class I-like SAM-binding methyltransferase superfamily. RNA methyltransferase RlmE family.

Its subcellular location is the cytoplasm. It carries out the reaction uridine(2552) in 23S rRNA + S-adenosyl-L-methionine = 2'-O-methyluridine(2552) in 23S rRNA + S-adenosyl-L-homocysteine + H(+). Specifically methylates the uridine in position 2552 of 23S rRNA at the 2'-O position of the ribose in the fully assembled 50S ribosomal subunit. The polypeptide is Ribosomal RNA large subunit methyltransferase E (Methylibium petroleiphilum (strain ATCC BAA-1232 / LMG 22953 / PM1)).